Here is an 826-residue protein sequence, read N- to C-terminus: E3 ubiquitin-protein ligase SH3RF1 (826 aa).

The RING-type zinc finger occupies 12–53; the sequence is CPVCLERLDASAKVLPCQHTFCKRCLLGIVSSRKELRCPECR. The disordered stretch occupies residues 80–130; it reads PRKAGDGGSAGNSTNALRAQGSVTTNGGLNDAQNTQSGQQRIQARSPPVRG. Residues 90 to 122 are compositionally biased toward polar residues; sequence GNSTNALRAQGSVTTNGGLNDAQNTQSGQQRIQ. SH3 domains lie at 132 to 191 and 194 to 257; these read PQLP…IIKP and QPPP…FNSA. The interval 266–319 is disordered; that stretch reads KPSGADTGEGSSGTSHSGNSQKQADAKKNTKKRHSFTSLTMSNKSSQSVQNRHS. Residues 273–285 show a composition bias toward low complexity; that stretch reads GEGSSGTSHSGNS. Residues 301 to 317 are compositionally biased toward polar residues; that stretch reads FTSLTMSNKSSQSVQNR. In terms of domain architecture, SH3 3 spans 398 to 459; sequence ARPSVFIAIY…PGNYVAPVTR (62 aa). Disordered stretches follow at residues 647–694 and 725–759; these read NSAA…QTNS and DSVS…CSSL. A compositionally biased stretch (basic and acidic residues) spans 652–663; it reads KQDKDSKKEKKG. The region spanning 767 to 826 is the SH3 4 domain; that stretch reads RPCERYRVMVSYPPQSEAELELKEGDIVFVHKKREDGWFKGTLQRNGKTGLFPGSFVENI.

It belongs to the SH3RF family. Autoubiquitinated. Ubiquitinated by SH3RF2, leading to proteasome-mediated degradation.

The protein resides in the cytoplasm. Its subcellular location is the perinuclear region. The protein localises to the cell projection. It localises to the lamellipodium. It is found in the golgi apparatus. The protein resides in the trans-Golgi network. It catalyses the reaction S-ubiquitinyl-[E2 ubiquitin-conjugating enzyme]-L-cysteine + [acceptor protein]-L-lysine = [E2 ubiquitin-conjugating enzyme]-L-cysteine + N(6)-ubiquitinyl-[acceptor protein]-L-lysine.. It participates in protein modification; protein ubiquitination. Its function is as follows. Has E3 ubiquitin-protein ligase activity. In the absence of an external substrate, it can catalyze self-ubiquitination. Acts as a scaffold protein that contributes to the effective activation of the JNK signaling pathway. Plays an essential role in the anterior neural development. This Xenopus laevis (African clawed frog) protein is E3 ubiquitin-protein ligase SH3RF1 (sh3rf1).